The chain runs to 417 residues: MSEFKSDFLHTLSERGFIHQTSDDAGLDQLFRTETVTAYIGFDPTAASLHAGGLIQIMMLHWLQATGHRPISLMGGGTGMVGDPSFKDEARQLMTPETIAANIASIKTVFSNYLRYGDGPKDALMINNADWLLGINYLEFLRDVGRHFSVNRMLSFDSVKMRLEREQSLSFLEFNYMILQAYDFVELYERTGCRLQMGGSDQWGNIVNGIDLGHRMGTPQLYALTSPLLTTASGAKMGKSLSGAVWLNPDMLGPYEFWQYWRNTEDADVARFLKLYTTLPMAEINRLSKLGGSEINEVKKVLATEVTAMLHGRAAAEQAAETARKTFEEGALAENLPSVEVPAPELESGLGLLTLLVRAGLAASNGEARRHVQGGAVRINDDQVSDERRVIGSGDVTGDGVIKLSLGKKKHLLVRPV.

Tyrosine 39 contacts L-tyrosine. The 'HIGH' region motif lies at 44-53; that stretch reads PTAASLHAGG. Positions 176 and 180 each coordinate L-tyrosine. The 'KMSKS' region signature appears at 236–240; that stretch reads KMGKS. Lysine 239 lines the ATP pocket. One can recognise an S4 RNA-binding domain in the interval 350–417; sequence LGLLTLLVRA…KKKHLLVRPV (68 aa).

Belongs to the class-I aminoacyl-tRNA synthetase family. TyrS type 1 subfamily. As to quaternary structure, homodimer.

It is found in the cytoplasm. The catalysed reaction is tRNA(Tyr) + L-tyrosine + ATP = L-tyrosyl-tRNA(Tyr) + AMP + diphosphate + H(+). Functionally, catalyzes the attachment of tyrosine to tRNA(Tyr) in a two-step reaction: tyrosine is first activated by ATP to form Tyr-AMP and then transferred to the acceptor end of tRNA(Tyr). The sequence is that of Tyrosine--tRNA ligase from Rhizobium meliloti (strain 1021) (Ensifer meliloti).